The primary structure comprises 250 residues: Silencing boundary-establishment protein FUB1 (250 aa).

The disordered stretch occupies residues 179 to 250 (PDWSGGLPNP…GFGGSGSGFI (72 aa)). A compositionally biased stretch (basic and acidic residues) spans 202–213 (PNRRPAPRREDM). Residues 229–250 (PGSGGFGGSGSGGFGGSGSGFI) are compositionally biased toward gly residues.

The protein belongs to the proteasome inhibitor PI31 family. In terms of assembly, interacts with the 20S proteasome.

In terms of biological role, plays a role in the establishment of transcriptional silencing boundaries, preventing the propagation of heterochromatic silencing. The polypeptide is Silencing boundary-establishment protein FUB1 (Saccharomyces cerevisiae (strain ATCC 204508 / S288c) (Baker's yeast)).